We begin with the raw amino-acid sequence, 1436 residues long: Inositol hexakisphosphate and diphosphoinositol-pentakisphosphate kinase 1 (1436 aa).

64 to 65 (KK) is a substrate binding site. ATP-binding positions include Arg-145, Lys-198, His-205, Arg-224, 248–251 (EEFM), and 257–259 (DVK). 224 to 225 (RK) contributes to the substrate binding site. The substrate site is built by Lys-259 and Arg-273. ATP-binding positions include Ser-275, Asp-320, and 332–334 (DVN). 337-340 (SFVK) serves as a coordination point for substrate. The segment at 382–453 (PTTSGTMMEL…VLDITRLLLA (72 aa)) is polyphosphoinositide-binding domain. A disordered region spans residues 915–998 (GSAPAGCGFR…TSSSRPGGYR (84 aa)). Phosphoserine is present on residues Ser-939, Ser-982, Ser-1032, Ser-1068, Ser-1140, and Ser-1147. 2 disordered regions span residues 1131-1191 (NHQA…GFSD) and 1389-1436 (SELS…EAIS). Residues 1163 to 1181 (SSGPSSTVSSAGPSSPTTV) show a composition bias toward low complexity. A compositionally biased stretch (acidic residues) spans 1405 to 1436 (LSEETELQAQEVSEEIDQESEVVDELPPEAIS).

This sequence belongs to the histidine acid phosphatase family. VIP1 subfamily.

The protein resides in the cytoplasm. Its subcellular location is the cytosol. It is found in the cell membrane. It catalyses the reaction 1D-myo-inositol hexakisphosphate + ATP = 1-diphospho-1D-myo-inositol 2,3,4,5,6-pentakisphosphate + ADP. It carries out the reaction 5-diphospho-1D-myo-inositol 1,2,3,4,6-pentakisphosphate + ATP + H(+) = 1,5-bis(diphospho)-1D-myo-inositol 2,3,4,6-tetrakisphosphate + ADP. Bifunctional inositol kinase that acts in concert with the IP6K kinases IP6K1, IP6K2 and IP6K3 to synthesize the diphosphate group-containing inositol pyrophosphates diphosphoinositol pentakisphosphate, PP-InsP5, and bis-diphosphoinositol tetrakisphosphate, (PP)2-InsP4. PP-InsP5 and (PP)2-InsP4, also respectively called InsP7 and InsP8, regulate a variety of cellular processes, including apoptosis, vesicle trafficking, cytoskeletal dynamics, exocytosis, insulin signaling and neutrophil activation. Phosphorylates inositol hexakisphosphate (InsP6) at position 1 to produce PP-InsP5 which is in turn phosphorylated by IP6Ks to produce (PP)2-InsP4. Alternatively, phosphorylates PP-InsP5 at position 1, produced by IP6Ks from InsP6, to produce (PP)2-InsP4. Activated when cells are exposed to hyperosmotic stress. In Mus musculus (Mouse), this protein is Inositol hexakisphosphate and diphosphoinositol-pentakisphosphate kinase 1.